An 89-amino-acid chain; its full sequence is Small ribosomal subunit protein uS15 (89 aa).

Belongs to the universal ribosomal protein uS15 family. In terms of assembly, part of the 30S ribosomal subunit. Forms a bridge to the 50S subunit in the 70S ribosome, contacting the 23S rRNA.

Its function is as follows. One of the primary rRNA binding proteins, it binds directly to 16S rRNA where it helps nucleate assembly of the platform of the 30S subunit by binding and bridging several RNA helices of the 16S rRNA. Functionally, forms an intersubunit bridge (bridge B4) with the 23S rRNA of the 50S subunit in the ribosome. The protein is Small ribosomal subunit protein uS15 of Shewanella denitrificans (strain OS217 / ATCC BAA-1090 / DSM 15013).